Consider the following 168-residue polypeptide: Lipoprotein signal peptidase (168 aa).

Helical transmembrane passes span 57-77 (PKEVMILLVGTISLLIALYVF) and 86-106 (FILPFALVFGGGVGNMIDRIT). Residues D112 and D138 contribute to the active site. A helical transmembrane segment spans residues 131 to 151 (WPIFNIADSAITIGACLLILF).

It belongs to the peptidase A8 family.

It localises to the cell inner membrane. The catalysed reaction is Release of signal peptides from bacterial membrane prolipoproteins. Hydrolyzes -Xaa-Yaa-Zaa-|-(S,diacylglyceryl)Cys-, in which Xaa is hydrophobic (preferably Leu), and Yaa (Ala or Ser) and Zaa (Gly or Ala) have small, neutral side chains.. Its pathway is protein modification; lipoprotein biosynthesis (signal peptide cleavage). In terms of biological role, this protein specifically catalyzes the removal of signal peptides from prolipoproteins. The polypeptide is Lipoprotein signal peptidase (Chlorobium phaeobacteroides (strain DSM 266 / SMG 266 / 2430)).